Here is a 204-residue protein sequence, read N- to C-terminus: Outer-membrane lipoprotein carrier protein (204 aa).

The first 21 residues, 1 to 21 (MKKIAIVGALLTSFVASSVWA), serve as a signal peptide directing secretion. The tract at residues 169-204 (QRSSYQLKSQQNGAIDASKFTFTPPQGVTVDDQRNK) is disordered. Polar residues predominate over residues 171-181 (SSYQLKSQQNG).

Belongs to the LolA family. In terms of assembly, monomer.

The protein resides in the periplasm. Its function is as follows. Participates in the translocation of lipoproteins from the inner membrane to the outer membrane. Only forms a complex with a lipoprotein if the residue after the N-terminal Cys is not an aspartate (The Asp acts as a targeting signal to indicate that the lipoprotein should stay in the inner membrane). This is Outer-membrane lipoprotein carrier protein from Enterobacter sp. (strain 638).